We begin with the raw amino-acid sequence, 548 residues long: Chaperonin GroEL (548 aa).

Residues 30–33, Lys-51, 87–91, Gly-415, 478–480, and Asp-494 each bind ATP; these read TLGP, DGTTT, and NAA.

Belongs to the chaperonin (HSP60) family. In terms of assembly, forms a cylinder of 14 subunits composed of two heptameric rings stacked back-to-back. Interacts with the co-chaperonin GroES.

It is found in the cytoplasm. It carries out the reaction ATP + H2O + a folded polypeptide = ADP + phosphate + an unfolded polypeptide.. Together with its co-chaperonin GroES, plays an essential role in assisting protein folding. The GroEL-GroES system forms a nano-cage that allows encapsulation of the non-native substrate proteins and provides a physical environment optimized to promote and accelerate protein folding. This chain is Chaperonin GroEL, found in Trichlorobacter lovleyi (strain ATCC BAA-1151 / DSM 17278 / SZ) (Geobacter lovleyi).